A 446-amino-acid chain; its full sequence is Exodeoxyribonuclease 7 large subunit (446 aa).

The protein belongs to the XseA family. As to quaternary structure, heterooligomer composed of large and small subunits.

It is found in the cytoplasm. The catalysed reaction is Exonucleolytic cleavage in either 5'- to 3'- or 3'- to 5'-direction to yield nucleoside 5'-phosphates.. Bidirectionally degrades single-stranded DNA into large acid-insoluble oligonucleotides, which are then degraded further into small acid-soluble oligonucleotides. The protein is Exodeoxyribonuclease 7 large subunit of Streptococcus thermophilus (strain CNRZ 1066).